The following is a 298-amino-acid chain: Spermidine synthase (298 aa).

A PABS domain is found at 13-248; that stretch reads DGWFREINNM…GSIGFVVASK (236 aa). Residue Gln-44 participates in S-adenosyl 3-(methylsulfanyl)propylamine binding. A putrescine-binding site is contributed by Tyr-74. S-adenosyl 3-(methylsulfanyl)propylamine is bound by residues Gln-75, Asp-99, Asp-119, 150-151, and Asp-168; that span reads DG. Catalysis depends on Asp-168, which acts as the Proton acceptor. Putrescine contacts are provided by residues 168 to 171 and Tyr-236; that span reads DSSD.

It belongs to the spermidine/spermine synthase family.

The catalysed reaction is S-adenosyl 3-(methylsulfanyl)propylamine + putrescine = S-methyl-5'-thioadenosine + spermidine + H(+). It participates in amine and polyamine biosynthesis; spermidine biosynthesis; spermidine from putrescine: step 1/1. In Schizosaccharomyces pombe (strain 972 / ATCC 24843) (Fission yeast), this protein is Spermidine synthase.